The chain runs to 255 residues: Proteasome subunit alpha type-3 (255 aa).

Position 2 is an N-acetylserine (S2). Residues K57, K206, and K230 each carry the N6-acetyllysine modification. Residues S243 and S250 each carry the phosphoserine modification.

The protein belongs to the peptidase T1A family. The 26S proteasome consists of a 20S proteasome core and two 19S regulatory subunits. The 20S proteasome core is a barrel-shaped complex made of 28 subunits that are arranged in four stacked rings. The two outer rings are each formed by seven alpha subunits, and the two inner rings are formed by seven beta subunits. The proteolytic activity is exerted by three beta-subunits PSMB5, PSMB6 and PSMB7. Interacts with AURKB. Interacts with CDKN1A. Interacts with MDM2 and RB1. Interacts with the C-terminus of TBXA2R isoform 2. Interacts with DNAJB2.

It is found in the cytoplasm. Its subcellular location is the nucleus. Its function is as follows. Component of the 20S core proteasome complex involved in the proteolytic degradation of most intracellular proteins. This complex plays numerous essential roles within the cell by associating with different regulatory particles. Associated with two 19S regulatory particles, forms the 26S proteasome and thus participates in the ATP-dependent degradation of ubiquitinated proteins. The 26S proteasome plays a key role in the maintenance of protein homeostasis by removing misfolded or damaged proteins that could impair cellular functions, and by removing proteins whose functions are no longer required. Associated with the PA200 or PA28, the 20S proteasome mediates ubiquitin-independent protein degradation. This type of proteolysis is required in several pathways including spermatogenesis (20S-PA200 complex) or generation of a subset of MHC class I-presented antigenic peptides (20S-PA28 complex). Binds to the C-terminus of CDKN1A and thereby mediates its degradation. Negatively regulates the membrane trafficking of the cell-surface thromboxane A2 receptor (TBXA2R) isoform 2. The protein is Proteasome subunit alpha type-3 (PSMA3) of Bos taurus (Bovine).